The primary structure comprises 380 residues: MAPNLRKSHPLLKMINNSLIDLPTPSNISVWWNFGSLLGICLTTQILTGLLLAAHYTADTTLAFSSVAHTCRNVQHGWLIRNLHANGASFFFICIYMHIGRGLYYGSYLYKETWNTGVILLLTLMATAFVGYVLPWGQMSFWGATVITNLFSAIPYIGQTIVEWAWGGFSVDNPTLTRFFTLHFLLPFMIMGLTLIHLTFLHESGSNNPLGIVSNCDKIPFHPYFSLKDTLGFMLMFLPLMTLALFSPNLLGDPENFTPANPLVTPPHIKPEWYFLFAYGFLRSIPNKLGGVLALAASMLILFLAPLLHKSKQRTMTFRPLSQLLFWTLTANLLILTWVGSQPVEHPFIIIGQLASLTYFTILLILFPMTGALENKMLNY.

4 helical membrane-spanning segments follow: residues 34 to 54 (FGSL…LLAA), 78 to 99 (WLIR…YMHI), 114 to 134 (WNTG…GYVL), and 179 to 199 (FFTL…IHLT). H84 and H98 together coordinate heme b. 2 residues coordinate heme b: H183 and H197. Residue H202 participates in a ubiquinone binding. The next 4 membrane-spanning stretches (helical) occupy residues 227-247 (LKDT…ALFS), 289-309 (LGGV…PLLH), 321-341 (LSQL…WVGS), and 348-368 (FIII…ILFP).

It belongs to the cytochrome b family. The cytochrome bc1 complex contains 11 subunits: 3 respiratory subunits (MT-CYB, CYC1 and UQCRFS1), 2 core proteins (UQCRC1 and UQCRC2) and 6 low-molecular weight proteins (UQCRH/QCR6, UQCRB/QCR7, UQCRQ/QCR8, UQCR10/QCR9, UQCR11/QCR10 and a cleavage product of UQCRFS1). This cytochrome bc1 complex then forms a dimer. Heme b is required as a cofactor.

The protein resides in the mitochondrion inner membrane. Component of the ubiquinol-cytochrome c reductase complex (complex III or cytochrome b-c1 complex) that is part of the mitochondrial respiratory chain. The b-c1 complex mediates electron transfer from ubiquinol to cytochrome c. Contributes to the generation of a proton gradient across the mitochondrial membrane that is then used for ATP synthesis. In Balearica regulorum (Grey crowned-crane), this protein is Cytochrome b (MT-CYB).